A 337-amino-acid chain; its full sequence is Glycerol-3-phosphate dehydrogenase [NAD(P)+] (337 aa).

W12 and K107 together coordinate NADPH. Positions 107, 138, and 140 each coordinate sn-glycerol 3-phosphate. A142 serves as a coordination point for NADPH. Sn-glycerol 3-phosphate-binding residues include K193, D246, S256, R257, and N258. K193 serves as the catalytic Proton acceptor. Position 257 (R257) interacts with NADPH. Positions 282 and 284 each coordinate NADPH.

Belongs to the NAD-dependent glycerol-3-phosphate dehydrogenase family.

The protein localises to the cytoplasm. The catalysed reaction is sn-glycerol 3-phosphate + NAD(+) = dihydroxyacetone phosphate + NADH + H(+). The enzyme catalyses sn-glycerol 3-phosphate + NADP(+) = dihydroxyacetone phosphate + NADPH + H(+). Its pathway is membrane lipid metabolism; glycerophospholipid metabolism. Catalyzes the reduction of the glycolytic intermediate dihydroxyacetone phosphate (DHAP) to sn-glycerol 3-phosphate (G3P), the key precursor for phospholipid synthesis. This is Glycerol-3-phosphate dehydrogenase [NAD(P)+] from Koribacter versatilis (strain Ellin345).